The primary structure comprises 127 residues: Putative membrane protein insertion efficiency factor (127 aa).

The segment at 71–106 (DPPPPPRLHRAAAARMPRQRDADPRDTTRCSSTGAE) is disordered. The span at 88 to 98 (RQRDADPRDTT) shows a compositional bias: basic and acidic residues.

Belongs to the UPF0161 family.

It is found in the cell inner membrane. Could be involved in insertion of integral membrane proteins into the membrane. This Sorangium cellulosum (strain So ce56) (Polyangium cellulosum (strain So ce56)) protein is Putative membrane protein insertion efficiency factor.